The chain runs to 1435 residues: Probable ATP-dependent DNA helicase HFM1 (1435 aa).

Residues 290-478 form the Helicase ATP-binding domain; the sequence is DDLLYTDRNF…WLSDGERPAV (189 aa). 303–310 is a binding site for ATP; it reads APTGSGKT. Residues 411–414 carry the DEAH box motif; sequence DEVH. The Helicase C-terminal domain occupies 519–720; it reads SVIQMYSDQK…DVNIAVEWIR (202 aa). Residues 777 to 1092 form the SEC63 domain; sequence PTEAGRLMAW…GLDIQQKLTV (316 aa). Positions 1109–1139 are disordered; it reads KSETQISHSKHSDISTIAGPNKGTTASKKPG. A C4-type zinc finger spans residues 1143 to 1158; it reads CNHLCKSKHTCGHDCC. Residues 1295–1315 are disordered; the sequence is GFGNTLSSSTRGSKLPLQESK. The segment covering 1296–1306 has biased composition (polar residues); that stretch reads FGNTLSSSTRG.

This sequence belongs to the helicase family. SKI2 subfamily. Zn(2+) serves as cofactor. As to expression, preferentially expressed in testis and ovary.

The enzyme catalyses Couples ATP hydrolysis with the unwinding of duplex DNA by translocating in the 3'-5' direction.. It catalyses the reaction ATP + H2O = ADP + phosphate + H(+). Required for crossover formation and complete synapsis of homologous chromosomes during meiosis. This Homo sapiens (Human) protein is Probable ATP-dependent DNA helicase HFM1 (HFM1).